A 342-amino-acid chain; its full sequence is Phosphate acyltransferase (342 aa).

It belongs to the PlsX family. In terms of assembly, homodimer. Probably interacts with PlsY.

It is found in the cytoplasm. It carries out the reaction a fatty acyl-[ACP] + phosphate = an acyl phosphate + holo-[ACP]. The protein operates within lipid metabolism; phospholipid metabolism. In terms of biological role, catalyzes the reversible formation of acyl-phosphate (acyl-PO(4)) from acyl-[acyl-carrier-protein] (acyl-ACP). This enzyme utilizes acyl-ACP as fatty acyl donor, but not acyl-CoA. This is Phosphate acyltransferase from Pelotomaculum thermopropionicum (strain DSM 13744 / JCM 10971 / SI).